The primary structure comprises 795 residues: Inactive N-acetylated-alpha-linked acidic dipeptidase-like protein 2 (795 aa).

The segment at M1–N38 is disordered. Topologically, residues M1 to N121 are cytoplasmic. S92 is modified (phosphoserine). Residues F122 to I142 traverse the membrane as a helical; Signal-anchor for type II membrane protein segment. The Extracellular portion of the chain corresponds to G143–N795. N-linked (GlcNAc...) asparagine glycans are attached at residues N295, N373, N534, and N759.

Belongs to the peptidase M28 family. M28B subfamily. As to expression, expressed at higher level in kidney and placenta. In embryo, it is mainly confined to duodenal and stomach endoderm, mesonephros, metanephros and pancreas.

The protein localises to the membrane. May be catalytically inactive. The sequence is that of Inactive N-acetylated-alpha-linked acidic dipeptidase-like protein 2 (NAALADL2) from Homo sapiens (Human).